The sequence spans 506 residues: Aminoaldehyde dehydrogenase 2 (506 aa).

Residue aspartate 101 coordinates Na(+). Residues 161–163 (TPW) and 187–190 (KPSE) contribute to the NAD(+) site. Leucine 191 is a Na(+) binding site. Residues 241–244 (STET) and glutamate 262 each bind NAD(+). The active-site Proton acceptor is the glutamate 262. Cysteine 297 acts as the Nucleophile in catalysis. Residues glutamate 396 and tryptophan 462 each coordinate NAD(+).

The protein belongs to the aldehyde dehydrogenase family.

The catalysed reaction is 4-aminobutanal + NAD(+) + H2O = 4-aminobutanoate + NADH + 2 H(+). It catalyses the reaction 3-aminopropanal + NAD(+) + H2O = beta-alanine + NADH + 2 H(+). It carries out the reaction 4-(trimethylamino)butanal + NAD(+) + H2O = 4-(trimethylamino)butanoate + NADH + 2 H(+). The enzyme catalyses 4-guanidinobutanal + NAD(+) + H2O = 4-guanidinobutanoate + NADH + 2 H(+). The protein operates within amine and polyamine biosynthesis; betaine biosynthesis via choline pathway; betaine from betaine aldehyde: step 1/1. In terms of biological role, dehydrogenase that catalyzes the oxidation of several aminoaldehydes. Metabolizes and detoxifies aldehyde products of polyamine degradation to non-toxic amino acids. Catalyzes the oxidation of 4-aminobutanal and 3-aminopropanal to 4-aminobutanoate and beta-alanine, respectively. Catalyzes the oxidation of 4-(trimethylamino)butanal and 4-guanidinobutanal to 4-trimethylammoniobutanoate and 4-guanidinobutanoate, respectively. This chain is Aminoaldehyde dehydrogenase 2, found in Zea mays (Maize).